The primary structure comprises 307 residues: MFSFNMFDHPIPRVFQNRFSTQYRCFSVSMLAGPNDRSDVEKGGKIIMPPSALDQLSRLNITYPMLFKLTNKNSDRMTHCGVLEFVADEGICYLPHWMMQNLLLEEGGLVQVESVNLQVATYSKFQPQSPDFLDITNPKAVLENALRNFACLTTGDVIAINYNEKIYELRVMETKPDKAVSIIECDMNVDFDAPLGYKEPERPVQHEESIEGEADHSGYAGEVGFRAFSGSGNRLDGKKKGVEPSPSPIKPGDIKRGIPNYEFKLGKITFIRNSRPLVKKVEEDEAGGRFIAFSGEGQSLRKKGRKP.

Met-1 bears the N-acetylmethionine mark. Residues Ser-129, Ser-231, Ser-245, Ser-247, and Ser-299 each carry the phosphoserine modification. 2 disordered regions span residues 230 to 255 and 288 to 307; these read GSGN…GDIK and GRFI…GRKP.

The protein belongs to the UFD1 family. In terms of assembly, heterodimer with NPLOC4, this heterodimer binds VCP and inhibits Golgi membrane fusion. Interacts with USP13. Interacts with ZFAND2B; probably through VCP.

The protein localises to the nucleus. Its subcellular location is the cytoplasm. It localises to the cytosol. The protein operates within protein degradation; proteasomal ubiquitin-dependent pathway. Essential component of the ubiquitin-dependent proteolytic pathway which degrades ubiquitin fusion proteins. The ternary complex containing UFD1, VCP and NPLOC4 binds ubiquitinated proteins and is necessary for the export of misfolded proteins from the ER to the cytoplasm, where they are degraded by the proteasome. The NPLOC4-UFD1-VCP complex regulates spindle disassembly at the end of mitosis and is necessary for the formation of a closed nuclear envelope. It may be involved in the development of some ectoderm-derived structures. Acts as a negative regulator of type I interferon production via the complex formed with VCP and NPLOC4, which binds to RIGI and recruits RNF125 to promote ubiquitination and degradation of RIGI. This is Ubiquitin recognition factor in ER-associated degradation protein 1 from Mus musculus (Mouse).